The following is a 459-amino-acid chain: Interleukin-7 receptor subunit alpha (459 aa).

An N-terminal signal peptide occupies residues 1 to 20 (MMALGRAFAIVFCLIQAVSG). The Extracellular segment spans residues 21–239 (ESGNAQDGDL…PEPKNQGGWD (219 aa)). A disulfide bridge links Cys42 with Cys57. An N-linked (GlcNAc...) asparagine glycan is attached at Asn60. 2 disulfides stabilise this stretch: Cys74/Cys82 and Cys108/Cys118. 2 N-linked (GlcNAc...) asparagine glycosylation sites follow: Asn115 and Asn177. The Fibronectin type-III domain occupies 131-232 (APSDLKVVYR…PSSTFETPEP (102 aa)). The WSXWS motif signature appears at 218-222 (WSEWS). The helical transmembrane segment at 240–264 (PVLPSVTILSLFSVFLLVILAHVLW) threads the bilayer. Topologically, residues 265 to 459 (KKRIKPVVWP…VTMSSFYQNK (195 aa)) are cytoplasmic. The short motif at 272–280 (VWPSLPDHK) is the Box 1 motif element. Residue Thr282 is modified to Phosphothreonine; by PKC. Disordered stretches follow at residues 337 to 365 (TQGH…RRES) and 378 to 413 (NAPP…NTNV). Polar residues predominate over residues 347 to 357 (ANRSPETSVSP). The span at 388-397 (PDYRDGDRNR) shows a compositional bias: basic and acidic residues.

Belongs to the type I cytokine receptor family. Type 4 subfamily. In terms of assembly, the IL7 receptor is a heterodimer of IL7R and IL2RG. The TSLP receptor is a heterodimer of CRLF2 and IL7R. Interacts with CD53. Post-translationally, N-glycosylated IL-7Ralpha binds IL7 300-fold more tightly than the unglycosylated form. Ubiquitinated by MARCHF8; leading to lysosomal degradation. As to expression, spleen, thymus and fetal liver.

The protein resides in the membrane. Its function is as follows. Receptor for interleukin-7. Also acts as a receptor for thymic stromal lymphopoietin (TSLP). This Mus musculus (Mouse) protein is Interleukin-7 receptor subunit alpha (Il7r).